A 498-amino-acid chain; its full sequence is ATP synthase subunit beta, chloroplastic (498 aa).

172-179 (GGAGVGKT) is a binding site for ATP.

Belongs to the ATPase alpha/beta chains family. F-type ATPases have 2 components, CF(1) - the catalytic core - and CF(0) - the membrane proton channel. CF(1) has five subunits: alpha(3), beta(3), gamma(1), delta(1), epsilon(1). CF(0) has four main subunits: a(1), b(1), b'(1) and c(9-12).

The protein resides in the plastid. It localises to the chloroplast thylakoid membrane. The catalysed reaction is ATP + H2O + 4 H(+)(in) = ADP + phosphate + 5 H(+)(out). Produces ATP from ADP in the presence of a proton gradient across the membrane. The catalytic sites are hosted primarily by the beta subunits. This chain is ATP synthase subunit beta, chloroplastic, found in Sorghum bicolor (Sorghum).